We begin with the raw amino-acid sequence, 323 residues long: Ubiquinone biosynthesis protein COQ4, mitochondrial (323 aa).

The N-terminal 29 residues, 1 to 29, are a transit peptide targeting the mitochondrion; the sequence is MLKSTVSNTRIKCCRIDQRRNYLFTALAS. Positions 205, 206, 209, and 221 each coordinate Zn(2+).

This sequence belongs to the COQ4 family. In terms of assembly, component of a multi-subunit COQ enzyme complex, composed of at least COQ3, COQ4, COQ5, COQ6, COQ7 and COQ9. Zn(2+) serves as cofactor.

Its subcellular location is the mitochondrion inner membrane. It carries out the reaction a 4-hydroxy-3-methoxy-5-(all-trans-polyprenyl)benzoate + H(+) = a 2-methoxy-6-(all-trans-polyprenyl)phenol + CO2. The protein operates within cofactor biosynthesis; ubiquinone biosynthesis. Functionally, lyase that catalyzes the C1-decarboxylation of 4-hydroxy-3-methoxy-5-(all-trans-polyprenyl)benzoic acid into 2-methoxy-6-(all-trans-polyprenyl)phenol during ubiquinone biosynthesis. The chain is Ubiquinone biosynthesis protein COQ4, mitochondrial from Candida dubliniensis (strain CD36 / ATCC MYA-646 / CBS 7987 / NCPF 3949 / NRRL Y-17841) (Yeast).